A 287-amino-acid chain; its full sequence is Eukaryotic translation initiation factor 3 subunit F (287 aa).

The MPN domain occupies Val12–Gly142.

It belongs to the eIF-3 subunit F family. As to quaternary structure, component of the eukaryotic translation initiation factor 3 (eIF-3) complex.

It is found in the cytoplasm. Its function is as follows. Component of the eukaryotic translation initiation factor 3 (eIF-3) complex, which is involved in protein synthesis of a specialized repertoire of mRNAs and, together with other initiation factors, stimulates binding of mRNA and methionyl-tRNAi to the 40S ribosome. The eIF-3 complex specifically targets and initiates translation of a subset of mRNAs involved in cell proliferation. This chain is Eukaryotic translation initiation factor 3 subunit F, found in Aedes aegypti (Yellowfever mosquito).